We begin with the raw amino-acid sequence, 183 residues long: Holliday junction branch migration complex subunit RuvA (183 aa).

Positions 1–64 (MIVAIEGIVS…EDSHKLYGFL (64 aa)) are domain I. Positions 65-138 (DTNEQRMFEL…SDAKINIENS (74 aa)) are domain II. Serine 138 is a region of interest (flexible linker). A domain III region spans residues 138 to 183 (SNQDHAQALAALLSLGFKQENILKVLRTCESQNTSELIKEALKKLA).

It belongs to the RuvA family. Homotetramer. Forms an RuvA(8)-RuvB(12)-Holliday junction (HJ) complex. HJ DNA is sandwiched between 2 RuvA tetramers; dsDNA enters through RuvA and exits via RuvB. An RuvB hexamer assembles on each DNA strand where it exits the tetramer. Each RuvB hexamer is contacted by two RuvA subunits (via domain III) on 2 adjacent RuvB subunits; this complex drives branch migration. In the full resolvosome a probable DNA-RuvA(4)-RuvB(12)-RuvC(2) complex forms which resolves the HJ.

Its subcellular location is the cytoplasm. Functionally, the RuvA-RuvB-RuvC complex processes Holliday junction (HJ) DNA during genetic recombination and DNA repair, while the RuvA-RuvB complex plays an important role in the rescue of blocked DNA replication forks via replication fork reversal (RFR). RuvA specifically binds to HJ cruciform DNA, conferring on it an open structure. The RuvB hexamer acts as an ATP-dependent pump, pulling dsDNA into and through the RuvAB complex. HJ branch migration allows RuvC to scan DNA until it finds its consensus sequence, where it cleaves and resolves the cruciform DNA. In Campylobacter lari (strain RM2100 / D67 / ATCC BAA-1060), this protein is Holliday junction branch migration complex subunit RuvA.